The following is a 529-amino-acid chain: MQQLRPIHRALLSVSDKSGVVEFAKALSQRGVELLSTGGTARLLAESDLKVTEVSDYTGFPEMMDGRVKTLHPKVHGGILGRRGQDDEIMAQHQISPIDMVVVNLYPFAQTVAKPDCTLADAVENIDIGGPTMVRSAAKNHKDVAIVVNSKDYKKIIEEMDNNQGSLTQSTRFDLAIKAFEHTAAYDSMIANYFGKLVPPYHGDTTQPSGRFPRTLNLNFIKKQDMRYGENSHQDAAFYIEENLSESSIATATQLQGKALSYNNIADTDAALECVKEFVEPACVIVKHANPCGVAIGKDIHEAYDSAFKTDPTSAFGGIIAFNRELDIKTAQAIIDRQFVEVIIAPSVNKDVLPVLATKQNIRVLVCGEWEDRAAGLDFKRVNGGLLVQDRDLGMVAVTNLRVVSKRHPTEQEMKDALFCWKVAKFVKSNAIVYAKNDMTIGIGAGQMSRVYSAKIAGIKAADEGLEVQGCAMASDAFFPFRDGIDAAAAVGVSCIIQPGGSIRDDEVITAADEHGIAMIFTGMRHFRH.

An MGS-like domain is found at 2–148 (QQLRPIHRAL…KNHKDVAIVV (147 aa)).

Belongs to the PurH family.

It catalyses the reaction (6R)-10-formyltetrahydrofolate + 5-amino-1-(5-phospho-beta-D-ribosyl)imidazole-4-carboxamide = 5-formamido-1-(5-phospho-D-ribosyl)imidazole-4-carboxamide + (6S)-5,6,7,8-tetrahydrofolate. It carries out the reaction IMP + H2O = 5-formamido-1-(5-phospho-D-ribosyl)imidazole-4-carboxamide. It participates in purine metabolism; IMP biosynthesis via de novo pathway; 5-formamido-1-(5-phospho-D-ribosyl)imidazole-4-carboxamide from 5-amino-1-(5-phospho-D-ribosyl)imidazole-4-carboxamide (10-formyl THF route): step 1/1. The protein operates within purine metabolism; IMP biosynthesis via de novo pathway; IMP from 5-formamido-1-(5-phospho-D-ribosyl)imidazole-4-carboxamide: step 1/1. The chain is Bifunctional purine biosynthesis protein PurH from Photorhabdus laumondii subsp. laumondii (strain DSM 15139 / CIP 105565 / TT01) (Photorhabdus luminescens subsp. laumondii).